A 359-amino-acid polypeptide reads, in one-letter code: MSLQRFLQRQGSNGNLEYCADSAYGSYSVLTGQLTMEDNRRIQVLADTVATLPRGRKQLALARSSSLGDFSWSQRKVVTVEKQDNGTFGFEIQTYRLQNQNICSSEVCTMICKVQEDSPAHCAGLQVGDIFANVNGVSTEGFTHKQVVDLIRSSGNLLTIETLNGTMIHRRAELEAKLQTLKQTLKKKWVELRSLHLQEQRLLHGDTANSPNLENMDLDESSLFGNLLGPSPALLDRHRLSSESSCKSWLSSLTVDSEDGYRSSMSEDSIRGAFSRQTSTDDECFHSKDGDEILRNASSRRNRSISVTSSGSFSPLWESNYSSVFGTLPRKSRRGSVRKQILKFIPGLHRAVEEEESRF.

Residues 77 to 166 (VVTVEKQDNG…LLTIETLNGT (90 aa)) form the PDZ domain. Residues 165–188 (GTMIHRRAELEAKLQTLKQTLKKK) are a coiled coil. The interval 166–188 (TMIHRRAELEAKLQTLKQTLKKK) is interaction with CYTH1.

Interacts with CYTH1 and SNX27.

It is found in the cytoplasm. Its subcellular location is the early endosome. Its function is as follows. By its binding to cytohesin-1 (CYTH1), it modifies activation of ARFs by CYTH1 and its precise function may be to sequester CYTH1 in the cytoplasm. The polypeptide is Cytohesin-interacting protein (Cytip) (Mus musculus (Mouse)).